We begin with the raw amino-acid sequence, 273 residues long: Putative phosphoenolpyruvate synthase regulatory protein (273 aa).

Residue 154–161 (GVSRSGKT) participates in ADP binding.

This sequence belongs to the pyruvate, phosphate/water dikinase regulatory protein family. PSRP subfamily.

It carries out the reaction [pyruvate, water dikinase] + ADP = [pyruvate, water dikinase]-phosphate + AMP + H(+). The catalysed reaction is [pyruvate, water dikinase]-phosphate + phosphate + H(+) = [pyruvate, water dikinase] + diphosphate. Its function is as follows. Bifunctional serine/threonine kinase and phosphorylase involved in the regulation of the phosphoenolpyruvate synthase (PEPS) by catalyzing its phosphorylation/dephosphorylation. The polypeptide is Putative phosphoenolpyruvate synthase regulatory protein (Halorhodospira halophila (strain DSM 244 / SL1) (Ectothiorhodospira halophila (strain DSM 244 / SL1))).